We begin with the raw amino-acid sequence, 960 residues long: Phosphoenolpyruvate carboxylase 2 (960 aa).

Catalysis depends on residues His-167 and Lys-595.

This sequence belongs to the PEPCase type 1 family. As to quaternary structure, homotetramer. The cofactor is Mg(2+).

Its subcellular location is the cytoplasm. It catalyses the reaction oxaloacetate + phosphate = phosphoenolpyruvate + hydrogencarbonate. The protein operates within photosynthesis; C3 acid pathway. Its function is as follows. Through the carboxylation of phosphoenolpyruvate (PEP) it forms oxaloacetate, a four-carbon dicarboxylic acid source for the tricarboxylic acid cycle. This is Phosphoenolpyruvate carboxylase 2 from Sorghum bicolor (Sorghum).